Consider the following 113-residue polypeptide: Holo-[acyl-carrier-protein] synthase (113 aa).

Mg(2+) contacts are provided by Asp5 and Glu50.

It belongs to the P-Pant transferase superfamily. AcpS family. Mg(2+) serves as cofactor.

The protein resides in the cytoplasm. The catalysed reaction is apo-[ACP] + CoA = holo-[ACP] + adenosine 3',5'-bisphosphate + H(+). In terms of biological role, transfers the 4'-phosphopantetheine moiety from coenzyme A to a Ser of acyl-carrier-protein. The protein is Holo-[acyl-carrier-protein] synthase of Nautilia profundicola (strain ATCC BAA-1463 / DSM 18972 / AmH).